Here is a 358-residue protein sequence, read N- to C-terminus: tRNA-specific 2-thiouridylase MnmA (358 aa).

ATP-binding positions include 6–13 (AMSGGVDS) and Leu32. Cys101 (nucleophile) is an active-site residue. Cys101 and Cys193 are disulfide-bonded. ATP is bound at residue Gly125. Positions 143–145 (KDQ) are interaction with tRNA. Cys193 (cysteine persulfide intermediate) is an active-site residue.

This sequence belongs to the MnmA/TRMU family.

It localises to the cytoplasm. The enzyme catalyses S-sulfanyl-L-cysteinyl-[protein] + uridine(34) in tRNA + AH2 + ATP = 2-thiouridine(34) in tRNA + L-cysteinyl-[protein] + A + AMP + diphosphate + H(+). Its function is as follows. Catalyzes the 2-thiolation of uridine at the wobble position (U34) of tRNA, leading to the formation of s(2)U34. The chain is tRNA-specific 2-thiouridylase MnmA from Mycolicibacterium paratuberculosis (strain ATCC BAA-968 / K-10) (Mycobacterium paratuberculosis).